A 344-amino-acid chain; its full sequence is DNA fragmentation factor subunit beta (344 aa).

The region spanning 7–83 (QPKCVKLRAL…LLTAGETWHG (77 aa)) is the CIDE-N domain.

Heterodimer of DFFA and DFFB. Interacts with H1-1.

It localises to the cytoplasm. Its subcellular location is the nucleus. Inhibited by DFFA (DFF45). Functionally, nuclease that induces DNA fragmentation and chromatin condensation during apoptosis. Degrades naked DNA and induces apoptotic morphology. In Mus musculus (Mouse), this protein is DNA fragmentation factor subunit beta (Dffb).